We begin with the raw amino-acid sequence, 147 residues long: MKHLIRRLSRVADSSSEFSIRRSTSSFRNRRGHHRLHAPPPPWSICPARRVNTVPAGHVPVYVGEEMERFVVSAELMNHPIFVGLLNRSAQEYGYAQKGVLHIPCHVIVFERVVETLRLGGFEGSGDLENLVASLLSGDELIPETTE.

This sequence belongs to the ARG7 family. As to expression, specifically expressed in the quiescent center and cortex or endodermis initials of root stem niches. Expressed in vascular tissues from hypocotyls, petioles and cotyledons.

It localises to the cytoplasm. Its function is as follows. Plays a role in the regulation of cell expansion, root meristem patterning and auxin transport. The protein is Auxin-responsive protein SAUR41 of Arabidopsis thaliana (Mouse-ear cress).